The chain runs to 63 residues: Metallothionein-2 (63 aa).

The tract at residues 1 to 30 (MDPQDCTCAAGDSCSCAGSCKCKNCRCQSC) is beta. C6, C8, C14, C16, C20, C22, C25, C27, C30, C34, C35, C37, C38, C42, C45, C49, C51, C59, C61, and C62 together coordinate a divalent metal cation. Positions 31 to 63 (RKSCCSCCPASCSNCAKGCVCKEPSSSKCSCCH) are alpha.

Belongs to the metallothionein superfamily. Type 1 family.

Its function is as follows. Metallothioneins have a high content of cysteine residues that bind various heavy metals. This is Metallothionein-2 from Columba livia (Rock dove).